A 612-amino-acid polypeptide reads, in one-letter code: Phosphoenolpyruvate carboxykinase [GTP] (612 aa).

Substrate-binding positions include arginine 82 and 221-223 (YGG). The Mn(2+) site is built by lysine 230 and histidine 250. Residue serine 272 coordinates substrate. 273–278 (ACGKTN) serves as a coordination point for GTP. Cysteine 274 is an active-site residue. Aspartate 297 contributes to the Mn(2+) binding site. 388–390 (NSR) lines the substrate pocket. Residues arginine 390, arginine 421, and 516-519 (FGEN) contribute to the GTP site.

This sequence belongs to the phosphoenolpyruvate carboxykinase [GTP] family. As to quaternary structure, monomer. The cofactor is Mn(2+).

It is found in the cytoplasm. The catalysed reaction is oxaloacetate + GTP = phosphoenolpyruvate + GDP + CO2. The protein operates within carbohydrate biosynthesis; gluconeogenesis. In terms of biological role, catalyzes the conversion of oxaloacetate (OAA) to phosphoenolpyruvate (PEP), the rate-limiting step in the metabolic pathway that produces glucose from lactate and other precursors derived from the citric acid cycle. This is Phosphoenolpyruvate carboxykinase [GTP] from Corynebacterium efficiens (strain DSM 44549 / YS-314 / AJ 12310 / JCM 11189 / NBRC 100395).